A 101-amino-acid polypeptide reads, in one-letter code: U-scoloptoxin(10)-Sm2a (101 aa).

The first 23 residues, 1–23 (MNKSMIILCAVLFLTYIIEENEA), serve as a signal peptide directing secretion.

It belongs to the scoloptoxin-10 family. In terms of processing, contains 3 disulfide bonds. In terms of tissue distribution, expressed by the venom gland.

The protein localises to the secreted. The chain is U-scoloptoxin(10)-Sm2a from Scolopendra morsitans (Tanzanian blue ringleg centipede).